Consider the following 312-residue polypeptide: DNA-directed RNA polymerase subunit alpha (312 aa).

The tract at residues 1-229 (MLQYQIDRIE…ELFQPLATVT (229 aa)) is alpha N-terminal domain (alpha-NTD). The segment at 236-312 (IEPEPSAEAQ…ISIPQSRTSV (77 aa)) is alpha C-terminal domain (alpha-CTD).

This sequence belongs to the RNA polymerase alpha chain family. As to quaternary structure, in cyanobacteria the RNAP catalytic core is composed of 2 alpha, 1 beta, 1 beta', 1 gamma and 1 omega subunit. When a sigma factor is associated with the core the holoenzyme is formed, which can initiate transcription.

It carries out the reaction RNA(n) + a ribonucleoside 5'-triphosphate = RNA(n+1) + diphosphate. In terms of biological role, DNA-dependent RNA polymerase catalyzes the transcription of DNA into RNA using the four ribonucleoside triphosphates as substrates. This chain is DNA-directed RNA polymerase subunit alpha, found in Synechococcus sp. (strain CC9311).